A 94-amino-acid chain; its full sequence is Co-chaperonin GroES (94 aa).

This sequence belongs to the GroES chaperonin family. Heptamer of 7 subunits arranged in a ring. Interacts with the chaperonin GroEL.

The protein resides in the cytoplasm. In terms of biological role, together with the chaperonin GroEL, plays an essential role in assisting protein folding. The GroEL-GroES system forms a nano-cage that allows encapsulation of the non-native substrate proteins and provides a physical environment optimized to promote and accelerate protein folding. GroES binds to the apical surface of the GroEL ring, thereby capping the opening of the GroEL channel. This Ruminiclostridium cellulolyticum (strain ATCC 35319 / DSM 5812 / JCM 6584 / H10) (Clostridium cellulolyticum) protein is Co-chaperonin GroES.